A 217-amino-acid polypeptide reads, in one-letter code: Peroxiredoxin (217 aa).

The region spanning A2–T159 is the Thioredoxin domain. The Cysteine sulfenic acid (-SOH) intermediate role is filled by C46. Residue R122 participates in substrate binding.

It belongs to the peroxiredoxin family. Prx6 subfamily. As to quaternary structure, homodecamer. Pentamer of dimers that assemble into a ring structure.

Its subcellular location is the cytoplasm. It catalyses the reaction a hydroperoxide + [thioredoxin]-dithiol = an alcohol + [thioredoxin]-disulfide + H2O. Functionally, thiol-specific peroxidase that catalyzes the reduction of hydrogen peroxide and organic hydroperoxides to water and alcohols, respectively. Plays a role in cell protection against oxidative stress by detoxifying peroxides. The polypeptide is Peroxiredoxin (Methanococcus vannielii (strain ATCC 35089 / DSM 1224 / JCM 13029 / OCM 148 / SB)).